The chain runs to 430 residues: Histidine--tRNA ligase (430 aa).

It belongs to the class-II aminoacyl-tRNA synthetase family. In terms of assembly, homodimer.

The protein resides in the cytoplasm. It catalyses the reaction tRNA(His) + L-histidine + ATP = L-histidyl-tRNA(His) + AMP + diphosphate + H(+). This is Histidine--tRNA ligase from Acinetobacter baumannii (strain ATCC 17978 / DSM 105126 / CIP 53.77 / LMG 1025 / NCDC KC755 / 5377).